The sequence spans 310 residues: tRNA dimethylallyltransferase (310 aa).

9-16 (GPTAVGKT) is an ATP binding site. A substrate-binding site is contributed by 11–16 (TAVGKT). The interval 34 to 37 (DSMQ) is interaction with substrate tRNA.

Belongs to the IPP transferase family. As to quaternary structure, monomer. Requires Mg(2+) as cofactor.

The enzyme catalyses adenosine(37) in tRNA + dimethylallyl diphosphate = N(6)-dimethylallyladenosine(37) in tRNA + diphosphate. Functionally, catalyzes the transfer of a dimethylallyl group onto the adenine at position 37 in tRNAs that read codons beginning with uridine, leading to the formation of N6-(dimethylallyl)adenosine (i(6)A). This chain is tRNA dimethylallyltransferase, found in Pediococcus pentosaceus (strain ATCC 25745 / CCUG 21536 / LMG 10740 / 183-1w).